We begin with the raw amino-acid sequence, 112 residues long: Putative pterin-4-alpha-carbinolamine dehydratase (112 aa).

Belongs to the pterin-4-alpha-carbinolamine dehydratase family.

The enzyme catalyses (4aS,6R)-4a-hydroxy-L-erythro-5,6,7,8-tetrahydrobiopterin = (6R)-L-erythro-6,7-dihydrobiopterin + H2O. This Shewanella sp. (strain MR-7) protein is Putative pterin-4-alpha-carbinolamine dehydratase.